Reading from the N-terminus, the 158-residue chain is Cyclic pyranopterin monophosphate synthase (158 aa).

Residues 75–77 (LCH) and 113–114 (ME) each bind substrate. Aspartate 128 is an active-site residue.

The protein belongs to the MoaC family. As to quaternary structure, homohexamer; trimer of dimers.

It carries out the reaction (8S)-3',8-cyclo-7,8-dihydroguanosine 5'-triphosphate = cyclic pyranopterin phosphate + diphosphate. It participates in cofactor biosynthesis; molybdopterin biosynthesis. Catalyzes the conversion of (8S)-3',8-cyclo-7,8-dihydroguanosine 5'-triphosphate to cyclic pyranopterin monophosphate (cPMP). This Ralstonia nicotianae (strain ATCC BAA-1114 / GMI1000) (Ralstonia solanacearum) protein is Cyclic pyranopterin monophosphate synthase.